The following is a 500-amino-acid chain: 4-alpha-glucanotransferase (500 aa).

It belongs to the disproportionating enzyme family.

It is found in the cytoplasm. It catalyses the reaction Transfers a segment of a (1-&gt;4)-alpha-D-glucan to a new position in an acceptor, which may be glucose or a (1-&gt;4)-alpha-D-glucan.. This Thermus thermophilus protein is 4-alpha-glucanotransferase (malQ).